The primary structure comprises 325 residues: Lipoyl synthase (325 aa).

Positions 1-24 are disordered; it reads MPIAPDRVRHPEKANRPDNPIQRK. [4Fe-4S] cluster-binding residues include C54, C59, C65, C80, C84, C87, and S293. In terms of domain architecture, Radical SAM core spans 66 to 282; that stretch reads WKKKHATFMI…VTVGRGKGFL (217 aa).

This sequence belongs to the radical SAM superfamily. Lipoyl synthase family. Requires [4Fe-4S] cluster as cofactor.

The protein localises to the cytoplasm. It catalyses the reaction [[Fe-S] cluster scaffold protein carrying a second [4Fe-4S](2+) cluster] + N(6)-octanoyl-L-lysyl-[protein] + 2 oxidized [2Fe-2S]-[ferredoxin] + 2 S-adenosyl-L-methionine + 4 H(+) = [[Fe-S] cluster scaffold protein] + N(6)-[(R)-dihydrolipoyl]-L-lysyl-[protein] + 4 Fe(3+) + 2 hydrogen sulfide + 2 5'-deoxyadenosine + 2 L-methionine + 2 reduced [2Fe-2S]-[ferredoxin]. The protein operates within protein modification; protein lipoylation via endogenous pathway; protein N(6)-(lipoyl)lysine from octanoyl-[acyl-carrier-protein]: step 2/2. Its function is as follows. Catalyzes the radical-mediated insertion of two sulfur atoms into the C-6 and C-8 positions of the octanoyl moiety bound to the lipoyl domains of lipoate-dependent enzymes, thereby converting the octanoylated domains into lipoylated derivatives. This chain is Lipoyl synthase, found in Rhodospirillum centenum (strain ATCC 51521 / SW).